The sequence spans 204 residues: CDP-archaeol synthase (204 aa).

A run of 6 helical transmembrane segments spans residues 5-25 (VYAC…YVIL), 43-63 (MLWV…SRLV), 91-111 (FEGF…LAYA), 116-136 (GVSA…GAFV), 147-167 (PAIL…QGLF), and 175-195 (VVVA…MAAF).

Belongs to the CDP-archaeol synthase family. Mg(2+) is required as a cofactor.

The protein localises to the cell membrane. The enzyme catalyses 2,3-bis-O-(geranylgeranyl)-sn-glycerol 1-phosphate + CTP + H(+) = CDP-2,3-bis-O-(geranylgeranyl)-sn-glycerol + diphosphate. It participates in membrane lipid metabolism; glycerophospholipid metabolism. In terms of biological role, catalyzes the formation of CDP-2,3-bis-(O-geranylgeranyl)-sn-glycerol (CDP-archaeol) from 2,3-bis-(O-geranylgeranyl)-sn-glycerol 1-phosphate (DGGGP) and CTP. This reaction is the third ether-bond-formation step in the biosynthesis of archaeal membrane lipids. This chain is CDP-archaeol synthase, found in Thermofilum pendens (strain DSM 2475 / Hrk 5).